We begin with the raw amino-acid sequence, 297 residues long: Beta-1,3-galactosyltransferase 5 (297 aa).

At 1-7 the chain is on the cytoplasmic side; sequence MAFPKMR. Residues 8 to 28 traverse the membrane as a helical; Signal-anchor for type II membrane protein segment; that stretch reads LMYVCLLVLGALCVYFSMYSL. At 29–297 the chain is on the lumenal side; sequence NLFKEQSFVY…KPRTLLDYWQ (269 aa). N-linked (GlcNAc...) asparagine glycosylation is found at Asn-130, Asn-174, and Asn-231.

It belongs to the glycosyltransferase 31 family.

Its subcellular location is the golgi apparatus membrane. The enzyme catalyses a globoside Gb4Cer (d18:1(4E)) + UDP-alpha-D-galactose = a globoside GalGb4Cer (d18:1(4E)) + UDP + H(+). The protein operates within protein modification; protein glycosylation. In terms of biological role, catalyzes the transfer of Gal to GlcNAc-based acceptors with a preference for the core3 O-linked glycan GlcNAc(beta1,3)GalNAc structure. Can use glycolipid LC3Cer as an efficient acceptor. The sequence is that of Beta-1,3-galactosyltransferase 5 (B3GALT5) from Pan troglodytes (Chimpanzee).